The primary structure comprises 34 residues: Cytochrome b6-f complex subunit 8 (34 aa).

A helical transmembrane segment spans residues 3 to 23 (LLTFGWAALLAVFTFSLAMVV).

This sequence belongs to the PetN family. The 4 large subunits of the cytochrome b6-f complex are cytochrome b6, subunit IV (17 kDa polypeptide, PetD), cytochrome f and the Rieske protein, while the 4 small subunits are PetG, PetL, PetM and PetN. The complex functions as a dimer.

It localises to the cellular thylakoid membrane. Component of the cytochrome b6-f complex, which mediates electron transfer between photosystem II (PSII) and photosystem I (PSI), cyclic electron flow around PSI, and state transitions. This is Cytochrome b6-f complex subunit 8 from Synechococcus elongatus (strain ATCC 33912 / PCC 7942 / FACHB-805) (Anacystis nidulans R2).